A 1034-amino-acid chain; its full sequence is Potassium-transporting ATPase alpha chain 1 (1034 aa).

The Cytoplasmic portion of the chain corresponds to 1–97; it reads MGKAENYEMY…NALRPPRGTP (97 aa). 2 positions are modified to phosphotyrosine: Tyr7 and Tyr10. Positions 14–41 are disordered; sequence LGPGPGGDMAAKMSKKKAGKGGGKKKEK. Residues 26–39 show a composition bias toward basic residues; the sequence is MSKKKAGKGGGKKK. Ser27 carries the phosphoserine modification. The helical transmembrane segment at 98-118 threads the bilayer; it reads EYVKFARQLAGGLQCLMWVAA. Over 119–141 the chain is Lumenal; sequence AICLIAFAIQASEGDLTTDDNLY. Residues 142 to 162 traverse the membrane as a helical segment; sequence LALALIAVVVVTGCFGYYQEF. Over 163 to 298 the chain is Cytoplasmic; it reads KSTNIIASFK…NEKTPIAIEI (136 aa). Residues 225 to 239 show a composition bias toward polar residues; sequence NSSLTGESEPQTRSP. The tract at residues 225-245 is disordered; sequence NSSLTGESEPQTRSPECTHES. A helical transmembrane segment spans residues 299–318; the sequence is EHFVDIIAGLAILFGATFFV. The Lumenal segment spans residues 319 to 330; sequence VAMCIGYTFLRA. The chain crosses the membrane as a helical span at residues 331–348; sequence MVFFMAIVVAYVPEGLLA. Residues Val339, Ala340, Val342, and Glu344 each coordinate K(+). Residues 349–782 are Cytoplasmic-facing; sequence TVTVCLSLTA…EQGRLIFDNL (434 aa). Asp386 acts as the 4-aspartylphosphate intermediate in catalysis. 2 residues coordinate Mg(2+): Asp386 and Thr388. Ser462 and Ser600 each carry phosphoserine. The Mg(2+) site is built by Asp727 and Asp731. The chain crosses the membrane as a helical span at residues 783–802; that stretch reads KKSIAYTLTKNIPELTPYLI. A K(+)-binding site is contributed by Glu796. Over 803–812 the chain is Lumenal; the sequence is YITVSVPLPL. The helical transmembrane segment at 813–833 threads the bilayer; sequence GCITILFIELCTDIFPSVSLA. Glu821 contacts K(+). The Cytoplasmic segment spans residues 834–853; sequence YEKAESDIMHLRPRNPKRDR. Ser839 is modified (phosphoserine). Residues 854–876 traverse the membrane as a helical segment; the sequence is LVNEPLAAYSYFQIGAIQSFAGF. Residues 877-928 lie on the Lumenal side of the membrane; it reads TDYFTAMAQEGWFPLLCVGLRPYWENHHLQDLQDSYGQEWTFGQRLYQQYTC. A helical membrane pass occupies residues 929–948; sequence YTVFFISIEMCQIADVLIRK. Residues 949 to 962 lie on the Cytoplasmic side of the membrane; it reads TRRLSAFQQGFFRN. Ser953 is subject to Phosphoserine; by PKA. Residues 963–981 form a helical membrane-spanning segment; the sequence is RILVIAIVFQVCIGCFLCY. The Lumenal segment spans residues 982–996; that stretch reads CPGMPNIFNFMPIRY. A helical transmembrane segment spans residues 997–1017; that stretch reads QWWLVPMPFGLLIFVYDEIRK. At 1018–1034 the chain is on the cytoplasmic side; it reads LGVRCCPGSWWDQELYY.

Belongs to the cation transport ATPase (P-type) (TC 3.A.3) family. Type IIC subfamily. As to quaternary structure, the gastric H(+)/K(+) ATPase pump is composed of the catalytic alpha subunit ATP4A and the regulatory beta subunit ATP4B. Interacts (via the P-domain) with ATP4B (via N-terminus); this interaction stabilizes the lumenal-open E2 conformation state and prevents the reverse reaction of the transport cycle.

Its subcellular location is the apical cell membrane. It carries out the reaction K(+)(out) + ATP + H2O + H(+)(in) = K(+)(in) + ADP + phosphate + 2 H(+)(out). Its function is as follows. The catalytic subunit of the gastric H(+)/K(+) ATPase pump which transports H(+) ions in exchange for K(+) ions across the apical membrane of parietal cells. Uses ATP as an energy source to pump H(+) ions to the gastric lumen while transporting K(+) ion from the lumen into the cell. Remarkably generates a million-fold proton gradient across the gastric parietal cell membrane, acidifying the gastric juice down to pH 1. Within a transport cycle, the transfer of a H(+) ion across the membrane is coupled to ATP hydrolysis and is associated with a transient phosphorylation that shifts the pump conformation from inward-facing (E1) to outward-facing state (E2). The release of the H(+) ion in the stomach lumen is followed by binding of K(+) ion converting the pump conformation back to the E1 state. The polypeptide is Potassium-transporting ATPase alpha chain 1 (ATP4A) (Canis lupus familiaris (Dog)).